The primary structure comprises 489 residues: Cobyric acid synthase (489 aa).

Residues 251-439 (RLTVVAPVYP…LHGLFDTPAA (189 aa)) enclose the GATase cobBQ-type domain. Cys-332 functions as the Nucleophile in the catalytic mechanism. Residue His-431 is part of the active site.

The protein belongs to the CobB/CobQ family. CobQ subfamily.

Its pathway is cofactor biosynthesis; adenosylcobalamin biosynthesis. Its function is as follows. Catalyzes amidations at positions B, D, E, and G on adenosylcobyrinic A,C-diamide. NH(2) groups are provided by glutamine, and one molecule of ATP is hydrogenolyzed for each amidation. The sequence is that of Cobyric acid synthase from Aromatoleum aromaticum (strain DSM 19018 / LMG 30748 / EbN1) (Azoarcus sp. (strain EbN1)).